Consider the following 361-residue polypeptide: tRNA-specific 2-thiouridylase MnmA (361 aa).

Residues 11-18 (GMSGGVDS) and Met-37 each bind ATP. The segment at 97–99 (NPD) is interaction with target base in tRNA. Residue Cys-102 is the Nucleophile of the active site. A disulfide bridge connects residues Cys-102 and Cys-199. Gly-126 lines the ATP pocket. The interval 149 to 151 (KDQ) is interaction with tRNA. Cys-199 (cysteine persulfide intermediate) is an active-site residue. The segment at 311-312 (RY) is interaction with tRNA.

Belongs to the MnmA/TRMU family.

The protein resides in the cytoplasm. The enzyme catalyses S-sulfanyl-L-cysteinyl-[protein] + uridine(34) in tRNA + AH2 + ATP = 2-thiouridine(34) in tRNA + L-cysteinyl-[protein] + A + AMP + diphosphate + H(+). Its function is as follows. Catalyzes the 2-thiolation of uridine at the wobble position (U34) of tRNA, leading to the formation of s(2)U34. This chain is tRNA-specific 2-thiouridylase MnmA, found in Cupriavidus taiwanensis (strain DSM 17343 / BCRC 17206 / CCUG 44338 / CIP 107171 / LMG 19424 / R1) (Ralstonia taiwanensis (strain LMG 19424)).